The primary structure comprises 402 residues: Putative neuropeptide Y receptor 11 (402 aa).

Residues 1 to 45 lie on the Extracellular side of the membrane; sequence MGSVNESCDNYVEIFNKINYFFRDDQVINGTEYSPKEFGYFITFA. 2 N-linked (GlcNAc...) asparagine glycosylation sites follow: Asn5 and Asn29. A helical membrane pass occupies residues 46–66; the sequence is YMLIILFGAIGNFLTIIVVIL. Topologically, residues 67–85 are cytoplasmic; that stretch reads NPAMRTTRNFFILNLALSD. The chain crosses the membrane as a helical span at residues 86–106; the sequence is FFVCIVTAPTTLYTVLYMFWP. Topologically, residues 107–122 are extracellular; that stretch reads FSRTLCKIAGSLQGFN. Residues Cys112 and Cys194 are joined by a disulfide bond. The chain crosses the membrane as a helical span at residues 123–143; that stretch reads IFLSTFSIASIAVDRYVLIIF. Topologically, residues 144–152 are cytoplasmic; sequence PTKRERQQN. A helical membrane pass occupies residues 153–173; that stretch reads LSFCFFIMIWVISLILAVPLL. The Extracellular segment spans residues 174–210; the sequence is QASDLTPVFVEPSCDLALYICHEQNEIWEKMIISKGT. A helical membrane pass occupies residues 211 to 231; the sequence is YTLAVLITQYAFPLFSLVFAY. The Cytoplasmic segment spans residues 232-272; sequence SRIAHRMKLRFANRNQNVTTNTNTSQRRRSVVERQRRTHLL. The chain crosses the membrane as a helical span at residues 273–293; it reads LVCVVAVFAVAWLPLNVFHIF. The Extracellular segment spans residues 294-306; the sequence is NTFELVNSFSVTT. Residues 307–328 form a helical membrane-spanning segment; sequence FSICHCLAMCSACLNPLIYAFF. Residues 329-402 are Cytoplasmic-facing; it reads NHNFRIEFMH…LSAMEQDEQL (74 aa).

This sequence belongs to the G-protein coupled receptor 1 family.

The protein resides in the cell membrane. Its function is as follows. Could be a receptor for neuropeptide Y and peptide YY. This chain is Putative neuropeptide Y receptor 11 (npr-11), found in Caenorhabditis elegans.